The primary structure comprises 440 residues: C4-dicarboxylate transport protein (440 aa).

Transmembrane regions (helical) follow at residues 8–28 (LYLQ…LFPA), 40–60 (FIKL…VTGI), 74–94 (LKGL…GLVV), 147–167 (GDIL…AALK), 187–207 (IVGF…AFTV), 221–241 (LIAC…GLVL), 288–308 (VVGL…SIYL), and 354–374 (AATL…LLGV). The tract at residues 419 to 440 (DEVEPANDPEPPAMAAGLGLHG) is disordered.

This sequence belongs to the dicarboxylate/amino acid:cation symporter (DAACS) (TC 2.A.23) family.

It is found in the cell inner membrane. In terms of biological role, responsible for the transport of dicarboxylates such as succinate, fumarate, and malate from the periplasm across the membrane. In Anaeromyxobacter dehalogenans (strain 2CP-C), this protein is C4-dicarboxylate transport protein.